The chain runs to 311 residues: Ornithine carbamoyltransferase (311 aa).

Carbamoyl phosphate-binding positions include 54-57, glutamine 81, arginine 105, and 132-135; these read STRT and HPCQ. Residues asparagine 164, aspartate 228, and 232–233 contribute to the L-ornithine site; that span reads SM. Residues 268–269 and arginine 296 each bind carbamoyl phosphate; that span reads CL.

The protein belongs to the aspartate/ornithine carbamoyltransferase superfamily. OTCase family.

It is found in the cytoplasm. The catalysed reaction is carbamoyl phosphate + L-ornithine = L-citrulline + phosphate + H(+). Its pathway is amino-acid biosynthesis; L-arginine biosynthesis; L-arginine from L-ornithine and carbamoyl phosphate: step 1/3. Reversibly catalyzes the transfer of the carbamoyl group from carbamoyl phosphate (CP) to the N(epsilon) atom of ornithine (ORN) to produce L-citrulline. This chain is Ornithine carbamoyltransferase, found in Renibacterium salmoninarum (strain ATCC 33209 / DSM 20767 / JCM 11484 / NBRC 15589 / NCIMB 2235).